The following is a 203-amino-acid chain: Glycerol-3-phosphate acyltransferase (203 aa).

4 consecutive transmembrane segments (helical) span residues 6–26, 82–102, 118–138, and 141–161; these read LTLL…AVLV, AISL…PIFF, APIG…LVLI, and YSSL…WWLD.

This sequence belongs to the PlsY family. In terms of assembly, probably interacts with PlsX.

The protein localises to the cell inner membrane. It catalyses the reaction an acyl phosphate + sn-glycerol 3-phosphate = a 1-acyl-sn-glycero-3-phosphate + phosphate. It participates in lipid metabolism; phospholipid metabolism. In terms of biological role, catalyzes the transfer of an acyl group from acyl-phosphate (acyl-PO(4)) to glycerol-3-phosphate (G3P) to form lysophosphatidic acid (LPA). This enzyme utilizes acyl-phosphate as fatty acyl donor, but not acyl-CoA or acyl-ACP. The polypeptide is Glycerol-3-phosphate acyltransferase (Shewanella sp. (strain ANA-3)).